The sequence spans 605 residues: E3 ubiquitin-protein ligase synoviolin A (605 aa).

The helical transmembrane segment at 1–19 (MTGASLALTAAVVAHAYYL) threads the bilayer. Over 20–35 (KNQFYPTVVYLTKSSP) the chain is Lumenal. The chain crosses the membrane as a helical span at residues 36–56 (SMAVLYIQAFVLVFLLGKFMG). Residues 57 to 92 (KVFFGQLRAAEMEHLLERSWYAVTETCLAFTVFRDD) are Cytoplasmic-facing. The helical transmembrane segment at 93–113 (FSPRFVALFTLLLFLKCFHWL) threads the bilayer. Topologically, residues 114 to 129 (AEDRVDFMERSPNISW) are lumenal. Residues 130 to 150 (LFHFRILALMLLLGVLDAFFV) traverse the membrane as a helical segment. Over 151–163 (SHAYHSLVIRGAS) the chain is Cytoplasmic. Residues 164–184 (VQLVFGFEYAILMTVILTVFI) traverse the membrane as a helical segment. Residues 185-218 (KYILHSVDLQSENPWDNKAVYMLYTELFTGFIKV) lie on the Lumenal side of the membrane. The helical transmembrane segment at 219–239 (LLYVAFMTIMVKVHTFPLFAI) threads the bilayer. The interval 230–264 (KVHTFPLFAIRPMYLAMRQFKKAVTDAIMSRRAIR) is interaction with p53/TP53. At 240–605 (RPMYLAMRQF…KLETGTTDSQ (366 aa)) the chain is on the cytoplasmic side. Zn(2+) is bound by residues Cys-285, Cys-288, Cys-301, His-303, His-306, Cys-309, Cys-320, and Cys-323. An RING-type; atypical zinc finger spans residues 285-324 (CIICREEMVTGAKRLPCNHIFHTSCLRSWFQRQQTCPTCR). The segment covering 334–355 (TQPQTPTEQQNQHQNQAQQQPT) has biased composition (low complexity). The interval 334 to 433 (TQPQTPTEQQ…QPGAALPGFP (100 aa)) is disordered. Over residues 356 to 391 (PVIPPQPNFPPGILPPFPPGMFPLWPPMGPFPPVPG) the composition is skewed to pro residues. Low complexity predominate over residues 403–414 (PGSSSGSSPRPG). A compositionally biased stretch (polar residues) spans 415-424 (ETSNVGSESQ). Residues 465–496 (EELRAMEGHERQNLEARLQCLQNIHTLLDAAM) are a coiled coil. Residues 513-605 (QPPISSTSTS…KLETGTTDSQ (93 aa)) form a disordered region. Residues 516–539 (ISSTSTSTSSAASASTAPTTSNIS) are compositionally biased toward low complexity. The segment covering 546-555 (DTTSTVTNTE) has biased composition (polar residues). The segment covering 556–579 (SSQQSAPPAPVSVETLSGAEGGET) has biased composition (low complexity).

This sequence belongs to the HRD1 family. Homodimer.

It is found in the endoplasmic reticulum membrane. The catalysed reaction is S-ubiquitinyl-[E2 ubiquitin-conjugating enzyme]-L-cysteine + [acceptor protein]-L-lysine = [E2 ubiquitin-conjugating enzyme]-L-cysteine + N(6)-ubiquitinyl-[acceptor protein]-L-lysine.. It functions in the pathway protein modification; protein ubiquitination. Its function is as follows. E3 ubiquitin-protein ligase which accepts ubiquitin specifically from endoplasmic reticulum-associated UBC7 E2 ligase and transfers it to substrates, promoting their degradation. Component of the endoplasmic reticulum quality control (ERQC) system also called ER-associated degradation (ERAD) involved in ubiquitin-dependent degradation of misfolded endoplasmic reticulum proteins. Also promotes the degradation of normal but naturally short-lived proteins. Protects cells from ER stress-induced apoptosis. Sequesters p53 in the cytoplasm and promotes its degradation, thereby negatively regulating its biological function in transcription, cell cycle regulation and apoptosis. The sequence is that of E3 ubiquitin-protein ligase synoviolin A (syvn1-a) from Xenopus laevis (African clawed frog).